The chain runs to 325 residues: MKYTFNEEKEFDIVAIGRACIDLNAVEYNRPMEQTMTFSKYVGGSPANIAIGSSKLGLKTGFIGKIPDDQHGRFIETYMRNTGVDTSQMAVDKDGHKAGLAFTEILSPEECSILMYRDDVADLYLAPSEVNEDYIAKSKMLLVSGTALAKSPSREAVLKAVQLAKKHQVKVVFELDYRPYTWTSAEETAVYYTLVAEQSDIVIGTRDEFDVMENKSGGSNEESVQHLFAHSADLVVIKHGVEGSYAYSKSGDVFRAKAYKTKVLKTFGAGDSYASAFLYGLVSGKDIETALKYGSASASIVVSKHSSSEAMPTVAEIEELIAAQS.

Belongs to the carbohydrate kinase PfkB family.

It catalyses the reaction 5-dehydro-2-deoxy-D-gluconate + ATP = 6-phospho-5-dehydro-2-deoxy-D-gluconate + ADP + H(+). It participates in polyol metabolism; myo-inositol degradation into acetyl-CoA; acetyl-CoA from myo-inositol: step 5/7. In terms of biological role, catalyzes the phosphorylation of 5-dehydro-2-deoxy-D-gluconate (2-deoxy-5-keto-D-gluconate or DKG) to 6-phospho-5-dehydro-2-deoxy-D-gluconate (DKGP). In Bacillus licheniformis (strain ATCC 14580 / DSM 13 / JCM 2505 / CCUG 7422 / NBRC 12200 / NCIMB 9375 / NCTC 10341 / NRRL NRS-1264 / Gibson 46), this protein is 5-dehydro-2-deoxygluconokinase.